We begin with the raw amino-acid sequence, 177 residues long: uncharacterized protein (177 aa).

This is an uncharacterized protein from Homo sapiens (Human).